We begin with the raw amino-acid sequence, 428 residues long: GTPase Obg (428 aa).

One can recognise an Obg domain in the interval 1–158; sequence MFVDQVKIYV…RDVILELKVL (158 aa). The 171-residue stretch at 159-329 folds into the OBG-type G domain; sequence ADVGLVGFPS…LLFEVANLIE (171 aa). Residues 165–172, 190–194, 212–215, 282–285, and 310–312 each bind GTP; these read GFPSVGKS, FTTIV, DLPG, NKMD, and SAV. Positions 172 and 192 each coordinate Mg(2+). Positions 350–428 constitute an OCT domain; sequence KFDTEGVKFE…ILEYEFEFID (79 aa).

Belongs to the TRAFAC class OBG-HflX-like GTPase superfamily. OBG GTPase family. Monomer. Mg(2+) is required as a cofactor.

Its subcellular location is the cytoplasm. Functionally, an essential GTPase which binds GTP, GDP and possibly (p)ppGpp with moderate affinity, with high nucleotide exchange rates and a fairly low GTP hydrolysis rate. Plays a role in control of the cell cycle, stress response, ribosome biogenesis and in those bacteria that undergo differentiation, in morphogenesis control. This chain is GTPase Obg, found in Bacillus cereus (strain ATCC 14579 / DSM 31 / CCUG 7414 / JCM 2152 / NBRC 15305 / NCIMB 9373 / NCTC 2599 / NRRL B-3711).